Reading from the N-terminus, the 513-residue chain is ATP synthase subunit alpha (513 aa).

169-176 (GDRQTGKT) is an ATP binding site.

This sequence belongs to the ATPase alpha/beta chains family. F-type ATPases have 2 components, CF(1) - the catalytic core - and CF(0) - the membrane proton channel. CF(1) has five subunits: alpha(3), beta(3), gamma(1), delta(1), epsilon(1). CF(0) has three main subunits: a(1), b(2) and c(9-12). The alpha and beta chains form an alternating ring which encloses part of the gamma chain. CF(1) is attached to CF(0) by a central stalk formed by the gamma and epsilon chains, while a peripheral stalk is formed by the delta and b chains.

It is found in the cell inner membrane. It catalyses the reaction ATP + H2O + 4 H(+)(in) = ADP + phosphate + 5 H(+)(out). Functionally, produces ATP from ADP in the presence of a proton gradient across the membrane. The alpha chain is a regulatory subunit. The polypeptide is ATP synthase subunit alpha (Shewanella amazonensis (strain ATCC BAA-1098 / SB2B)).